The primary structure comprises 572 residues: Proline--tRNA ligase (572 aa).

The protein belongs to the class-II aminoacyl-tRNA synthetase family. ProS type 1 subfamily. In terms of assembly, homodimer.

It localises to the cytoplasm. The catalysed reaction is tRNA(Pro) + L-proline + ATP = L-prolyl-tRNA(Pro) + AMP + diphosphate. In terms of biological role, catalyzes the attachment of proline to tRNA(Pro) in a two-step reaction: proline is first activated by ATP to form Pro-AMP and then transferred to the acceptor end of tRNA(Pro). As ProRS can inadvertently accommodate and process non-cognate amino acids such as alanine and cysteine, to avoid such errors it has two additional distinct editing activities against alanine. One activity is designated as 'pretransfer' editing and involves the tRNA(Pro)-independent hydrolysis of activated Ala-AMP. The other activity is designated 'posttransfer' editing and involves deacylation of mischarged Ala-tRNA(Pro). The misacylated Cys-tRNA(Pro) is not edited by ProRS. This chain is Proline--tRNA ligase, found in Psychrobacter arcticus (strain DSM 17307 / VKM B-2377 / 273-4).